A 3133-amino-acid chain; its full sequence is Probable polyketide synthase 38 (3133 aa).

A Ketosynthase family 3 (KS3) domain is found at 9-440; that stretch reads DDDVAVIGIG…GSNVCLILSE (432 aa). Catalysis depends on for beta-ketoacyl synthase activity residues Cys-181, His-320, and His-363. The tract at residues 647–680 is acyl/malonyl transferase; it reads GVSADIIIGHSLGEISSAYCSGMIDFQTLCYLTY. Ser-657 acts as the For acyl/malonyl transferase activity in catalysis. Residues 945–1067 form an N-terminal hotdog fold region; the sequence is GPSIHSLGNN…GNFSLSKHNI (123 aa). The region spanning 945-1248 is the PKS/mFAS DH domain; it reads GPSIHSLGNN…CTIVASNPDS (304 aa). His-979 functions as the Proton acceptor; for dehydratase activity in the catalytic mechanism. The tract at residues 1083 to 1248 is C-terminal hotdog fold; it reads NFTCISKQDL…CTIVASNPDS (166 aa). The active-site Proton donor; for dehydratase activity is the Asp-1155. The segment at 1370-1408 is disordered; the sequence is NNNNNNNNNNNNNNNNNNNNNNNNNNNNNNNNNDNDNDN. The Carrier domain maps to 2562–2639; it reads NNNEIIRSTI…QSIEIIKSAH (78 aa). The residue at position 2599 (Ser-2599) is an O-(pantetheine 4'-phosphoryl)serine. Residues 2649–2711 adopt a coiled-coil conformation; sequence NNNNSNHHDN…NNNNNNNNNN (63 aa). 2 disordered regions span residues 2691–2715 and 2794–2817; these read LNNN…NNNN and GNIS…NNNQ. Low complexity-rich tracts occupy residues 2692 to 2715 and 2795 to 2817; these read NNNN…NNNN and NISN…NNNQ.

It depends on pantetheine 4'-phosphate as a cofactor.

Functionally, probable polyketide synthase. The protein is Probable polyketide synthase 38 (pks38) of Dictyostelium discoideum (Social amoeba).